Reading from the N-terminus, the 376-residue chain is Alcohol dehydrogenase class-3 (376 aa).

Position 1 is an N-acetylserine (Ser-1). Zn(2+)-binding residues include Cys-47, His-69, Cys-99, Cys-102, Cys-105, Cys-113, and Cys-176.

Belongs to the zinc-containing alcohol dehydrogenase family. Class-III subfamily. In terms of assembly, homodimer. It depends on Zn(2+) as a cofactor. Liver and gut.

It is found in the cytoplasm. It catalyses the reaction a primary alcohol + NAD(+) = an aldehyde + NADH + H(+). It carries out the reaction a secondary alcohol + NAD(+) = a ketone + NADH + H(+). The catalysed reaction is S-(hydroxymethyl)glutathione + NADP(+) = S-formylglutathione + NADPH + H(+). The enzyme catalyses S-(hydroxymethyl)glutathione + NAD(+) = S-formylglutathione + NADH + H(+). It catalyses the reaction S-nitrosoglutathione + NADH + H(+) = S-(hydroxysulfenamide)glutathione + NAD(+). In terms of biological role, class-III ADH is remarkably ineffective in oxidizing ethanol, but it readily catalyzes the oxidation of long-chain primary alcohols and the oxidation of S-(hydroxymethyl) glutathione. Also acts as a S-nitroso-glutathione reductase by catalyzing the NADH-dependent reduction of S-nitrosoglutathione, thereby regulating protein S-nitrosylation. The polypeptide is Alcohol dehydrogenase class-3 (Myxine glutinosa (Atlantic hagfish)).